A 472-amino-acid polypeptide reads, in one-letter code: Glutamate synthase [NADPH] small chain (472 aa).

The 4Fe-4S ferredoxin-type domain occupies 38 to 69 (GQAKAQADRCLSCGNPYCEWKCPVHNYIPNWL). [4Fe-4S] cluster-binding residues include Cys47, Cys50, Cys55, and Cys59.

As to quaternary structure, aggregate of 4 catalytic active heterodimers, consisting of a large and a small subunit. The cofactor is [4Fe-4S] cluster.

It carries out the reaction 2 L-glutamate + NADP(+) = L-glutamine + 2-oxoglutarate + NADPH + H(+). It participates in amino-acid biosynthesis; L-glutamate biosynthesis via GLT pathway; L-glutamate from 2-oxoglutarate and L-glutamine (NADP(+) route): step 1/1. It functions in the pathway energy metabolism; nitrogen metabolism. In terms of biological role, catalyzes the conversion of L-glutamine and 2-oxoglutarate into two molecules of L-glutamate. This Escherichia coli (strain K12) protein is Glutamate synthase [NADPH] small chain (gltD).